Reading from the N-terminus, the 71-residue chain is Alpha-cobratoxin (71 aa).

Disulfide bonds link Cys3–Cys20, Cys14–Cys41, Cys26–Cys30, Cys45–Cys56, and Cys57–Cys62.

It belongs to the three-finger toxin family. Long-chain subfamily. Type II alpha-neurotoxin sub-subfamily. In terms of assembly, monomer, homo- or heterodimer with cytotoxins 1 (P60305), 2 (AC P01445), and 3 (AC P01446); disulfide-linked. Post-translationally, in homodimer alpha-cobratoxin, selective reduction of Cys(26)-Cys(30) in one subunit does not affect the activity against the alpha-7/CHRNA7 nAChR, whereas its reduction in both subunits almost prevents alpha-7/CHRNA7 nAChR recognition. On the contrary, reduction of one or both Cys(26)-Cys(30) disulfide bonds in the homodimer considerably potentiates inhibition of the alpha-3-beta-2/CHRNA3-CHRNB2 nAChR by the toxin. As to expression, expressed by the venom gland.

Its subcellular location is the secreted. Functionally, monomer: binds with high affinity to muscular (alpha-1-beta-1-gamma-delta/CHRNA1-CHRNB1-CHRNG-CHRND) nAChR (tested on Torpedo californica, Kd=0.2-4.5 nM) and neuronal alpha-7/CHRNA7 nicotinic acetylcholine receptors (Kd=13-105 nM). Also inhibits GABA(A) channels. Heteropentamer targets studied are composed of alpha-1-beta-3-gamma-2 (GABRA1-GABRB3-GABRG2) subunits (IC(50)=236 nM), alpha-1-beta-2-gamma-2 (GABRA1-GABRB2-GABRG2) subunits (IC(50)=469 nM), alpha-2-beta-2-gamma-2 (GABRA2-GABRB2-GABRG2) subunits (IC(50)=485 nM), alpha-5-beta-3-gamma-2 (GABRA5-GABRB3-GABRG2) subunits (IC(50)=635 nM), and alpha-2-beta-3-gamma-2 (GABRA2-GABRB3-GABRG2) subunits (IC(50)=1099 nM) (activated by 10 uM GABA). In terms of biological role, homodimer: binds with high affinity (but lower than the monomeric form) to muscular (IC(50)=9.7 nM) and with low affinity to neuronal alpha-7/CHRNA7 nAChRs (IC(50)=1370 nM). However, it acquires (compared to the monomeric form) the capacity to block alpha-3/beta-2 (CHRNA3/CHRNB2) nAChRs. Its function is as follows. Heterodimer with cytotoxin 3 (AC P01446): is slightly more active than the homodimer in inhibiting alpha-7/CHRNA7 nAChR and is considerably more active in blocking the alpha-3-beta-2/CHRNA3-CHRNB2 nAChR. The chain is Alpha-cobratoxin from Naja kaouthia (Monocled cobra).